Here is a 150-residue protein sequence, read N- to C-terminus: UPF0098 protein CT_736 (150 aa).

Belongs to the UPF0098 family.

In Chlamydia trachomatis serovar D (strain ATCC VR-885 / DSM 19411 / UW-3/Cx), this protein is UPF0098 protein CT_736.